Consider the following 33-residue polypeptide: Mu-theraphotoxin-Tp1a (33 aa).

3 disulfides stabilise this stretch: C2–C17, C9–C22, and C16–C29. The residue at position 33 (I33) is an Isoleucine amide.

This sequence belongs to the neurotoxin 10 (Hwtx-1) family. 55 (ProTx-III) subfamily. In terms of tissue distribution, expressed by the venom gland.

The protein resides in the secreted. In terms of biological role, inhibits voltage-gated sodium channels without significantly altering the voltage dependence of activation or inactivation. Preferentially inhibits human Nav1.7/SCN9A (IC(50)=2.1 nM) &gt; human Nav1.6/SCN8A &gt; human Nav1.2/SCN2A &gt; human Nav1.1/SCN1A &gt; human Nav1.3/SCN3A channels. Exhibits analgesic properties by reversing spontaneous pain induced in mice by intraplantar injection with OD1 (AC P84646), a scorpion toxin that potentiates human Nav1.7/SCN9A. This Thrixopelma pruriens (Peruvian green velvet tarantula) protein is Mu-theraphotoxin-Tp1a.